Here is a 223-residue protein sequence, read N- to C-terminus: MSDNAQLTGLSDRFRGFYPVVIDVETAGFNAKTDALLEIAAVTLKMDADGWLTPDETLHFHVEPFEGAILQPEALAFNGIDPHNPLRGAVSEYDALHAIFKMVRKGMKESNCNRAIMVAHNATFDHSFMMAAAERASLKRNPFHPFVTFDTAALSGLALGQTVLAKACIAAGMPFDSTQAHSALYDTEQTALLFCEIVNRWKRLGGWPVPPLAAEDATPQDGE.

Residues 20 to 194 (VVIDVETAGF…YDTEQTALLF (175 aa)) enclose the Exonuclease domain. The Mg(2+) site is built by Asp-23, Glu-25, His-181, and Asp-186. The Proton donor/acceptor role is filled by His-181.

Belongs to the RNase T family. In terms of assembly, homodimer. Requires Mg(2+) as cofactor.

Its function is as follows. Trims short 3' overhangs of a variety of RNA species, leaving a one or two nucleotide 3' overhang. Responsible for the end-turnover of tRNA: specifically removes the terminal AMP residue from uncharged tRNA (tRNA-C-C-A). Also appears to be involved in tRNA biosynthesis. This Cronobacter sakazakii (strain ATCC BAA-894) (Enterobacter sakazakii) protein is Ribonuclease T.